The primary structure comprises 260 residues: MEPMRSSCRYTEMQTVSYYEGYPSTNGDMNAYNANTAINSMYANNFPHDVHPNQARNGGHCYGSDSANSSPGESCREDELEHVLAPGFHGQGERRCLMWACKACKRKNVAVDKRKAATLRERRRLRKVNEAFEALKRHTCANPNQRLPKVEILRNAIEYIEKLERLLQVEKANGDSEMDSAETSSNTSDAMTDGSSPGSYSSDKAQQYGDGYDVSSPYGYNCGNASSLDCLSLIVESITPNKGKAITSPKKATSDGLCMV.

Residues 112–163 enclose the bHLH domain; the sequence is DKRKAATLRERRRLRKVNEAFEALKRHTCANPNQRLPKVEILRNAIEYIEKL. Residues 171–208 form a disordered region; that stretch reads KANGDSEMDSAETSSNTSDAMTDGSSPGSYSSDKAQQY. A compositionally biased stretch (polar residues) spans 181-205; the sequence is AETSSNTSDAMTDGSSPGSYSSDKA.

As to quaternary structure, efficient DNA binding requires dimerization with another bHLH protein. Homodimer, and heterodimer with the ubiquitous bHLH protein E12.

The protein resides in the nucleus. Its function is as follows. Regulatory factor during embryogenesis. Conversion of pluripotent secondary mesenchyme cells to myogenic cells. It binds to the MCK enhancer element. This Lytechinus variegatus (Green sea urchin) protein is Transcription factor SUM-1 (SUM-1).